A 253-amino-acid polypeptide reads, in one-letter code: Maleate isomerase (253 aa).

Residues Asn14, 80-82 (CLV), Tyr137, and Asn167 contribute to the substrate site. Cys80 functions as the Nucleophile in the catalytic mechanism. S-(2-succinyl)cysteine is present on Cys80. Cys198 (proton donor) is an active-site residue. 199–200 (VQ) provides a ligand contact to substrate.

This sequence belongs to the maleate isomerase family. As to quaternary structure, homodimer.

It carries out the reaction maleate = fumarate. Its function is as follows. Catalyzes cis-trans isomerization of the C2-C3 double bond in maleate to yield fumarate. The protein is Maleate isomerase of Alcaligenes faecalis.